Reading from the N-terminus, the 1969-residue chain is Myosin-3 (1969 aa).

The Myosin N-terminal SH3-like domain occupies 33-82 (DSKKNCWIPDPEDGFVAAEIQSTTGEQVTVVTVKGNQITVKKDQCQEMNP). The region spanning 86 to 791 (DKTEDMANLT…VLAKLEDLRD (706 aa)) is the Myosin motor domain. An N6,N6,N6-trimethyllysine modification is found at K130. 179–186 (GESGAGKT) contributes to the ATP binding site. Actin-binding stretches follow at residues 667–689 (LNNLMNMLYQTHPHFIRCIIPNE) and 770–784 (KVGETKIFFKAGVLA). Residues 794-823 (LSRIVTMFQSRIRSYLAKAEVRRRYEQQTG) form the IQ domain. Residues 857-1969 (KEQEAMGELA…IRSSSNARFL (1113 aa)) are a coiled coil. Disordered regions lie at residues 942–966 (MQERNEDLARQKKKTDQELSDTKKH), 1006–1029 (NKEKKHQEESNRKLNEDLQSEEDK), 1131–1213 (LEEE…GDSV), and 1234–1255 (KSKLQRDLEESQHATDSEVRSR). Basic and acidic residues-rich tracts occupy residues 1137 to 1164 (AERNSRQKSDRSRSEAERELEELTERLE) and 1176 to 1197 (ANKKREAEIAKLRREKEEDSLN).

The protein belongs to the TRAFAC class myosin-kinesin ATPase superfamily. Myosin family. In terms of assembly, muscle myosin is a hexameric protein that consists of 2 heavy chain subunits (MHC), 2 alkali light chain subunits (MLC) and 2 regulatory light chain subunits (MLC-2). In terms of tissue distribution, expressed in body wall muscles, neighboring vulval muscle cells and the contractile sheath covering the hermaphrodite gonad (myoepithelial sheath cells).

The protein resides in the cytoplasm. The protein localises to the myofibril. It is found in the sarcomere. It localises to the a band. Its function is as follows. Essential for muscle contraction. Involved in ovulation likely by regulating the contraction of gonadal myoepithelial sheath cells. The sequence is that of Myosin-3 (myo-3) from Caenorhabditis elegans.